A 271-amino-acid chain; its full sequence is Ribosomal RNA small subunit methyltransferase A (271 aa).

S-adenosyl-L-methionine contacts are provided by histidine 11, leucine 13, glycine 38, glutamate 58, aspartate 86, and asparagine 101.

Belongs to the class I-like SAM-binding methyltransferase superfamily. rRNA adenine N(6)-methyltransferase family. RsmA subfamily.

Its subcellular location is the cytoplasm. The enzyme catalyses adenosine(1518)/adenosine(1519) in 16S rRNA + 4 S-adenosyl-L-methionine = N(6)-dimethyladenosine(1518)/N(6)-dimethyladenosine(1519) in 16S rRNA + 4 S-adenosyl-L-homocysteine + 4 H(+). Its function is as follows. Specifically dimethylates two adjacent adenosines (A1518 and A1519) in the loop of a conserved hairpin near the 3'-end of 16S rRNA in the 30S particle. May play a critical role in biogenesis of 30S subunits. This is Ribosomal RNA small subunit methyltransferase A from Helicobacter pylori (strain P12).